The primary structure comprises 98 residues: DNA-binding protein Fis (98 aa).

The segment at residues 74–93 (QTRAATMLGINRGTLRKKLK) is a DNA-binding region (H-T-H motif).

Belongs to the transcriptional regulatory Fis family. In terms of assembly, homodimer.

Functionally, activates ribosomal RNA transcription. Plays a direct role in upstream activation of rRNA promoters. The polypeptide is DNA-binding protein Fis (Haemophilus ducreyi (strain 35000HP / ATCC 700724)).